Reading from the N-terminus, the 155-residue chain is Transcriptional repressor NrdR (155 aa).

The segment covering 1 to 10 (MQCPHCHHNS) has biased composition (basic residues). The tract at residues 1 to 21 (MQCPHCHHNSSRVVDSRPTDG) is disordered. A zinc finger spans residues 3 to 34 (CPHCHHNSSRVVDSRPTDGGRAIRRRRECENC). One can recognise an ATP-cone domain in the interval 49 to 139 (LLVIKKNGTR…VYRQFKDMSV (91 aa)).

The protein belongs to the NrdR family. The cofactor is Zn(2+).

Functionally, negatively regulates transcription of bacterial ribonucleotide reductase nrd genes and operons by binding to NrdR-boxes. This Lacticaseibacillus casei (strain BL23) (Lactobacillus casei) protein is Transcriptional repressor NrdR.